Consider the following 270-residue polypeptide: Ribosomal RNA small subunit methyltransferase A (270 aa).

Residues N18, L20, G45, E66, D91, and N112 each contribute to the S-adenosyl-L-methionine site.

This sequence belongs to the class I-like SAM-binding methyltransferase superfamily. rRNA adenine N(6)-methyltransferase family. RsmA subfamily.

The protein resides in the cytoplasm. The enzyme catalyses adenosine(1518)/adenosine(1519) in 16S rRNA + 4 S-adenosyl-L-methionine = N(6)-dimethyladenosine(1518)/N(6)-dimethyladenosine(1519) in 16S rRNA + 4 S-adenosyl-L-homocysteine + 4 H(+). Functionally, specifically dimethylates two adjacent adenosines (A1518 and A1519) in the loop of a conserved hairpin near the 3'-end of 16S rRNA in the 30S particle. May play a critical role in biogenesis of 30S subunits. The sequence is that of Ribosomal RNA small subunit methyltransferase A from Psychromonas ingrahamii (strain DSM 17664 / CCUG 51855 / 37).